A 122-amino-acid chain; its full sequence is NADH-quinone oxidoreductase subunit A (122 aa).

A run of 3 helical transmembrane segments spans residues 10-30 (MIVL…LTLG), 66-86 (IFAL…PWAV), and 91-111 (LGLF…VGLA).

This sequence belongs to the complex I subunit 3 family. As to quaternary structure, NDH-1 is composed of 14 different subunits. Subunits NuoA, H, J, K, L, M, N constitute the membrane sector of the complex.

It is found in the cell membrane. The enzyme catalyses a quinone + NADH + 5 H(+)(in) = a quinol + NAD(+) + 4 H(+)(out). Its function is as follows. NDH-1 shuttles electrons from NADH, via FMN and iron-sulfur (Fe-S) centers, to quinones in the respiratory chain. The immediate electron acceptor for the enzyme in this species is believed to be a menaquinone. Couples the redox reaction to proton translocation (for every two electrons transferred, four hydrogen ions are translocated across the cytoplasmic membrane), and thus conserves the redox energy in a proton gradient. In Bacillus thuringiensis subsp. konkukian (strain 97-27), this protein is NADH-quinone oxidoreductase subunit A.